Reading from the N-terminus, the 734-residue chain is Photosystem I P700 chlorophyll a apoprotein A2 (734 aa).

The next 8 membrane-spanning stretches (helical) occupy residues 46-69, 135-158, 175-199, 273-291, 330-353, 369-395, 417-439, and 517-535; these read IFSS…FHVA, LYNG…LHLQ, LNHH…HVAI, MAHH…GHMY, LHMQ…QHMY, AALY…IFFI, AIIS…LYIH, and FLVH…LILV. [4Fe-4S] cluster-binding residues include C559 and C568. Helical transmembrane passes span 575–596 and 643–665; these read AFYL…YWHW and LSVW…MFLI. Residues H654, M662, and Y670 each contribute to the chlorophyll a site. Position 671 (W671) interacts with phylloquinone. Residues 707-727 traverse the membrane as a helical segment; the sequence is LVGLVHFSVGYILTYAAFVIA.

The protein belongs to the PsaA/PsaB family. As to quaternary structure, the PsaA/B heterodimer binds the P700 chlorophyll special pair and subsequent electron acceptors. PSI consists of a core antenna complex that captures photons, and an electron transfer chain that converts photonic excitation into a charge separation. The eukaryotic PSI reaction center is composed of at least 11 subunits. It depends on P700 is a chlorophyll a/chlorophyll a' dimer, A0 is one or more chlorophyll a, A1 is one or both phylloquinones and FX is a shared 4Fe-4S iron-sulfur center. as a cofactor.

It is found in the plastid. The protein localises to the chloroplast thylakoid membrane. The catalysed reaction is reduced [plastocyanin] + hnu + oxidized [2Fe-2S]-[ferredoxin] = oxidized [plastocyanin] + reduced [2Fe-2S]-[ferredoxin]. In terms of biological role, psaA and PsaB bind P700, the primary electron donor of photosystem I (PSI), as well as the electron acceptors A0, A1 and FX. PSI is a plastocyanin/cytochrome c6-ferredoxin oxidoreductase, converting photonic excitation into a charge separation, which transfers an electron from the donor P700 chlorophyll pair to the spectroscopically characterized acceptors A0, A1, FX, FA and FB in turn. Oxidized P700 is reduced on the lumenal side of the thylakoid membrane by plastocyanin or cytochrome c6. The sequence is that of Photosystem I P700 chlorophyll a apoprotein A2 from Gracilaria tenuistipitata var. liui (Red alga).